Reading from the N-terminus, the 491-residue chain is Galactose-1-phosphate uridylyltransferase 1 (491 aa).

The protein belongs to the galactose-1-phosphate uridylyltransferase type 2 family.

The protein resides in the cytoplasm. It catalyses the reaction alpha-D-galactose 1-phosphate + UDP-alpha-D-glucose = alpha-D-glucose 1-phosphate + UDP-alpha-D-galactose. The protein operates within carbohydrate metabolism; galactose metabolism. The sequence is that of Galactose-1-phosphate uridylyltransferase 1 (galT1) from Streptococcus pneumoniae serotype 4 (strain ATCC BAA-334 / TIGR4).